Here is a 226-residue protein sequence, read N- to C-terminus: MFPLLIVLSQLPRLTLAVPHCIRSLKDSEHAPEEVFASKEAANIFMHRRLLNNRFDLELFTPGDLERECYEEFCSYEEAREILGDDENTIKFWQTYSIKGPTTGSDVNKEKIDVMSLLTGLIVAGVFLVIFGLVGYYVCLTKCKRRPYPSSSANYTRTARYTPSIVFRSPEEAVLSPSTSSEDAGLPSYEQAVALTRKHSVSPPPPYPGPARGFRVFKKSMSLPSH.

The first 17 residues, 1–17, serve as a signal peptide directing secretion; it reads MFPLLIVLSQLPRLTLA. The propeptide occupies 18 to 49; sequence VPHCIRSLKDSEHAPEEVFASKEAANIFMHRR. The Extracellular segment spans residues 50–113; that stretch reads LLNNRFDLEL…GSDVNKEKID (64 aa). In terms of domain architecture, Gla spans 52 to 98; that stretch reads NNRFDLELFTPGDLERECYEEFCSYEEAREILGDDENTIKFWQTYSI. A disulfide bridge connects residues Cys69 and Cys74. Residue Glu72 is modified to 4-carboxyglutamate. A helical membrane pass occupies residues 114–134; sequence VMSLLTGLIVAGVFLVIFGLV. Over 135–226 the chain is Cytoplasmic; the sequence is GYYVCLTKCK…FKKSMSLPSH (92 aa). Phosphoserine is present on Ser164. Positions 186 to 189 match the LPXY motif; mediates binding to WW domain-containing proteins motif; the sequence is LPSY. Positions 204–207 match the PPXY motif; mediates binding to WW domain-containing proteins motif; it reads PPPY.

Belongs to the commissureless family. In terms of assembly, interacts (via cytoplasmic domain) with WW domain-containing proteins MAGI1, MAGI3, NEDD4, NEDD4L, WWTR1/TAZ and YAP1. Gamma-carboxyglutamate residues are formed by vitamin K dependent carboxylation. These residues are essential for the binding of calcium.

It is found in the endoplasmic reticulum-Golgi intermediate compartment membrane. The protein resides in the cell membrane. Its function is as follows. May control axon guidance across the CNS. Prevents the delivery of ROBO1 at the cell surface and down-regulates its expression. The chain is Transmembrane gamma-carboxyglutamic acid protein 4 (Prrg4) from Mus musculus (Mouse).